The following is a 193-amino-acid chain: Acyl carrier protein phosphodiesterase (193 aa).

It belongs to the AcpH family.

It catalyses the reaction holo-[ACP] + H2O = apo-[ACP] + (R)-4'-phosphopantetheine + H(+). Functionally, converts holo-ACP to apo-ACP by hydrolytic cleavage of the phosphopantetheine prosthetic group from ACP. The chain is Acyl carrier protein phosphodiesterase from Pectobacterium atrosepticum (strain SCRI 1043 / ATCC BAA-672) (Erwinia carotovora subsp. atroseptica).